We begin with the raw amino-acid sequence, 613 residues long: tRNA (uracil-5-)-methyltransferase homolog A (613 aa).

The tract at residues 1 to 46 (MSEPAAEVPEPMEDCGQDASAVPSSAAPLCQKEEAGPGPAAGPGTQ) is disordered. Residues 63–136 (FKLELQNVPR…CPLSVRLARP (74 aa)) form the RRM domain. Residues 170–200 (YTEQLEQKRLECERVLQKLAKEIGNTNRALL) are a coiled coil. Residue S368 is modified to Phosphoserine. S-adenosyl-L-methionine is bound by residues Q401, E451, and D500. C528 (nucleophile) is an active-site residue. The Proton acceptor role is filled by E571.

Belongs to the class I-like SAM-binding methyltransferase superfamily. RNA M5U methyltransferase family. Widely expressed at low level. Expressed at higher level in proliferating cells.

Its subcellular location is the cytoplasm. The protein localises to the cytosol. The enzyme catalyses uridine(54) in tRNA + S-adenosyl-L-methionine = 5-methyluridine(54) in tRNA + S-adenosyl-L-homocysteine + H(+). The catalysed reaction is a uridine in mRNA + S-adenosyl-L-methionine = a 5-methyluridine in mRNA + S-adenosyl-L-homocysteine + H(+). In terms of biological role, S-adenosyl-L-methionine-dependent methyltransferase that catalyzes the formation of 5-methyl-uridine in tRNAs and some mRNAs. Mainly catalyzes the methylation of uridine at position 54 (m5U54) in cytosolic tRNAs. Also able to mediate the formation of 5-methyl-uridine in some mRNAs. The sequence is that of tRNA (uracil-5-)-methyltransferase homolog A from Mus musculus (Mouse).